A 351-amino-acid polypeptide reads, in one-letter code: Riboflavin-binding protein RibY (351 aa).

An N-terminal signal peptide occupies residues Met-1–Ala-19. The N-palmitoyl cysteine moiety is linked to residue Cys-20. Cys-20 carries the S-diacylglycerol cysteine lipid modification.

The protein belongs to the NMT1 family. In terms of assembly, the complex is likely composed of an ATP-binding protein, a transmembrane protein (RibX) and a solute-binding protein (RibY).

Its subcellular location is the cell membrane. Part of an ABC transporter complex that transports riboflavin into the cell. Binds riboflavin. The polypeptide is Riboflavin-binding protein RibY (Chloroflexus aurantiacus (strain ATCC 29366 / DSM 635 / J-10-fl)).